The chain runs to 270 residues: Phosphoribosylformylglycinamidine synthase subunit PurQ (270 aa).

One can recognise a Glutamine amidotransferase type-1 domain in the interval 5–251 (ALVLHATGTN…VIRERDSEEE (247 aa)). Cys95 (nucleophile) is an active-site residue. Active-site residues include His236 and Glu238.

Part of the FGAM synthase complex composed of 1 PurL, 1 PurQ and 2 PurS subunits.

It is found in the cytoplasm. It catalyses the reaction N(2)-formyl-N(1)-(5-phospho-beta-D-ribosyl)glycinamide + L-glutamine + ATP + H2O = 2-formamido-N(1)-(5-O-phospho-beta-D-ribosyl)acetamidine + L-glutamate + ADP + phosphate + H(+). The enzyme catalyses L-glutamine + H2O = L-glutamate + NH4(+). It functions in the pathway purine metabolism; IMP biosynthesis via de novo pathway; 5-amino-1-(5-phospho-D-ribosyl)imidazole from N(2)-formyl-N(1)-(5-phospho-D-ribosyl)glycinamide: step 1/2. Functionally, part of the phosphoribosylformylglycinamidine synthase complex involved in the purines biosynthetic pathway. Catalyzes the ATP-dependent conversion of formylglycinamide ribonucleotide (FGAR) and glutamine to yield formylglycinamidine ribonucleotide (FGAM) and glutamate. The FGAM synthase complex is composed of three subunits. PurQ produces an ammonia molecule by converting glutamine to glutamate. PurL transfers the ammonia molecule to FGAR to form FGAM in an ATP-dependent manner. PurS interacts with PurQ and PurL and is thought to assist in the transfer of the ammonia molecule from PurQ to PurL. This Treponema denticola (strain ATCC 35405 / DSM 14222 / CIP 103919 / JCM 8153 / KCTC 15104) protein is Phosphoribosylformylglycinamidine synthase subunit PurQ.